The sequence spans 81 residues: Large ribosomal subunit protein bL31B (81 aa).

The protein belongs to the bacterial ribosomal protein bL31 family. Type B subfamily. In terms of assembly, part of the 50S ribosomal subunit.

The protein is Large ribosomal subunit protein bL31B of Borrelia garinii subsp. bavariensis (strain ATCC BAA-2496 / DSM 23469 / PBi) (Borreliella bavariensis).